We begin with the raw amino-acid sequence, 155 residues long: 2-C-methyl-D-erythritol 2,4-cyclodiphosphate synthase (155 aa).

The a divalent metal cation site is built by Asp-8 and His-10. 4-CDP-2-C-methyl-D-erythritol 2-phosphate-binding positions include 8 to 10 (DVH) and 34 to 35 (HS). His-42 provides a ligand contact to a divalent metal cation. 4-CDP-2-C-methyl-D-erythritol 2-phosphate-binding positions include 56-58 (DIG), 61-65 (FPDSD), 100-106 (AQKPKML), 132-135 (TTEE), Phe-139, and Lys-142.

It belongs to the IspF family. In terms of assembly, homotrimer. Requires a divalent metal cation as cofactor.

The enzyme catalyses 4-CDP-2-C-methyl-D-erythritol 2-phosphate = 2-C-methyl-D-erythritol 2,4-cyclic diphosphate + CMP. The protein operates within isoprenoid biosynthesis; isopentenyl diphosphate biosynthesis via DXP pathway; isopentenyl diphosphate from 1-deoxy-D-xylulose 5-phosphate: step 4/6. Involved in the biosynthesis of isopentenyl diphosphate (IPP) and dimethylallyl diphosphate (DMAPP), two major building blocks of isoprenoid compounds. Catalyzes the conversion of 4-diphosphocytidyl-2-C-methyl-D-erythritol 2-phosphate (CDP-ME2P) to 2-C-methyl-D-erythritol 2,4-cyclodiphosphate (ME-CPP) with a corresponding release of cytidine 5-monophosphate (CMP). This chain is 2-C-methyl-D-erythritol 2,4-cyclodiphosphate synthase, found in Clostridium botulinum (strain ATCC 19397 / Type A).